The chain runs to 65 residues: Large ribosomal subunit protein bL35 (65 aa).

It belongs to the bacterial ribosomal protein bL35 family.

This Ruminiclostridium cellulolyticum (strain ATCC 35319 / DSM 5812 / JCM 6584 / H10) (Clostridium cellulolyticum) protein is Large ribosomal subunit protein bL35.